The chain runs to 245 residues: Probable phosphatase ECA2529 (245 aa).

The Zn(2+) site is built by His7, His9, His15, His40, Glu73, His101, His131, Asp192, and His194.

The protein belongs to the PHP family. As to quaternary structure, homotrimer. Zn(2+) is required as a cofactor.

In Pectobacterium atrosepticum (strain SCRI 1043 / ATCC BAA-672) (Erwinia carotovora subsp. atroseptica), this protein is Probable phosphatase ECA2529.